Reading from the N-terminus, the 84-residue chain is ATP synthase subunit c (84 aa).

Transmembrane regions (helical) follow at residues isoleucine 10–leucine 30 and phenylalanine 53–phenylalanine 73.

It belongs to the ATPase C chain family. As to quaternary structure, F-type ATPases have 2 components, F(1) - the catalytic core - and F(0) - the membrane proton channel. F(1) has five subunits: alpha(3), beta(3), gamma(1), delta(1), epsilon(1). F(0) has three main subunits: a(1), b(2) and c(10-14). The alpha and beta chains form an alternating ring which encloses part of the gamma chain. F(1) is attached to F(0) by a central stalk formed by the gamma and epsilon chains, while a peripheral stalk is formed by the delta and b chains.

Its subcellular location is the cell inner membrane. In terms of biological role, f(1)F(0) ATP synthase produces ATP from ADP in the presence of a proton or sodium gradient. F-type ATPases consist of two structural domains, F(1) containing the extramembraneous catalytic core and F(0) containing the membrane proton channel, linked together by a central stalk and a peripheral stalk. During catalysis, ATP synthesis in the catalytic domain of F(1) is coupled via a rotary mechanism of the central stalk subunits to proton translocation. Key component of the F(0) channel; it plays a direct role in translocation across the membrane. A homomeric c-ring of between 10-14 subunits forms the central stalk rotor element with the F(1) delta and epsilon subunits. The protein is ATP synthase subunit c of Shewanella putrefaciens (strain CN-32 / ATCC BAA-453).